Here is a 70-residue protein sequence, read N- to C-terminus: MRFIVALCLFAIVMCIIHKAEGTYRKPPFNGSIFGKRGVVEYDTTGRALSALCEIASETCQAWYQTLENK.

Positions 1 to 22 are cleaved as a signal peptide; the sequence is MRFIVALCLFAIVMCIIHKAEG. Phe-34 bears the Phenylalanine amide mark. The propeptide occupies 38-70; that stretch reads GVVEYDTTGRALSALCEIASETCQAWYQTLENK.

Expressed in antennal lobe (AL) and gnathal ganglion (GNG) with expression detected in most animals (at protein level). Not expressed in corpora cardiaca (CC) and corpora allata (CA) (at protein level).

The protein localises to the secreted. In terms of biological role, ligand for the neuropeptide SIFamide receptor. The chain is Neuropeptide SIFamide from Agrotis ipsilon (Black cutworm moth).